The following is a 265-amino-acid chain: Energy-coupling factor transporter transmembrane protein EcfT (265 aa).

5 consecutive transmembrane segments (helical) span residues 29 to 49 (IILFATLIFLANNTVTYAILI), 73 to 93 (VWILILFTVVLHIFITKGGTV), 110 to 130 (AIFISLRLGLLILISSLLTLT), 143 to 163 (LLGPLGKIGIPVHDIALMMSI), and 242 to 262 (FTWRDGIVAVVSVILVIVIGW).

Belongs to the energy-coupling factor EcfT family. In terms of assembly, forms a stable energy-coupling factor (ECF) transporter complex composed of 2 membrane-embedded substrate-binding proteins (S component), 2 ATP-binding proteins (A component) and 2 transmembrane proteins (T component). May be able to interact with more than 1 S component at a time.

The protein resides in the cell membrane. Functionally, transmembrane (T) component of an energy-coupling factor (ECF) ABC-transporter complex. Unlike classic ABC transporters this ECF transporter provides the energy necessary to transport a number of different substrates. This is Energy-coupling factor transporter transmembrane protein EcfT from Brevibacillus brevis (strain 47 / JCM 6285 / NBRC 100599).